A 191-amino-acid chain; its full sequence is MPKASEVKKNTAIEFNNNVYLIRDIERSVPQGRSGGSLYRMRMYDVATGSKLDHTFKADEMINLADLSRHEVSFSYIDGDEYVFMDIADYTPYHFNKDSIADEILFINEETQGLQVLTVDGTPVAIELPANVELVIVETDPSIKGASASARTKPAILSTGLSVQVPEYIANGEKIKINTAEHKFMSRADSK.

This sequence belongs to the elongation factor P family.

The sequence is that of Elongation factor P-like protein from Shewanella sediminis (strain HAW-EB3).